Reading from the N-terminus, the 489-residue chain is 5'-AMP-activated protein kinase subunit gamma-3 (489 aa).

A disordered region spans residues 1–113; the sequence is MEPGLEHALR…PAGVGTPPTG (113 aa). Over residues 34–46 the composition is skewed to low complexity; it reads SSSWPSPAVTSSS. A compositionally biased stretch (basic residues) spans 50–62; sequence RGKRRAKALRWTR. 3 CBS domains span residues 197-258, 280-340, and 355-415; these read MATS…RSPL, CFKP…LLPR, and TFRD…HLDM. ADP-binding positions include Arg-225, 240 to 245, Val-285, 306 to 307, and Lys-325; these read MLTITD and HR. AMP contacts are provided by residues Arg-225, 240-245, Val-285, His-306, 306-307, Lys-325, Thr-355, Ala-360, 381-382, 397-400, Arg-424, Leu-432, His-453, 453-454, and 469-472; these read MLTITD, HR, SA, SRFD, and SLSD. Residues Arg-225, 240-245, Val-285, 306-307, Arg-307, and Lys-325 each bind ATP; these read MLTITD and HR. Residues 293–314 carry the AMPK pseudosubstrate motif; that stretch reads LFEAVYTLIKNRIHRLPVLDPV. ADP-binding positions include 397–400, Arg-424, Leu-432, and 453–454; these read SRFD and HR. Residues 397 to 400, Arg-424, Leu-432, and 453 to 454 each bind ATP; these read SRFD and HR. One can recognise a CBS 4 domain in the interval 427 to 486; sequence CLEGVLSCQPHESLGEVIDRIAREQVHRLVLVDETQHLLGVVSLSDILQALVLSPAGIDA.

It belongs to the 5'-AMP-activated protein kinase gamma subunit family. AMPK is a heterotrimer of an alpha catalytic subunit (PRKAA1 or PRKAA2), a beta (PRKAB1 or PRKAB2) and a gamma non-catalytic subunits (PRKAG1, PRKAG2 or PRKAG3). Interacts with FNIP1 and FNIP2. Post-translationally, phosphorylated by ULK1; leading to negatively regulate AMPK activity and suggesting the existence of a regulatory feedback loop between ULK1 and AMPK. Glycosylated; O-GlcNAcylated by OGT, promoting the AMP-activated protein kinase (AMPK) activity. In terms of tissue distribution, skeletal muscle, with weak expression in heart and pancreas.

In terms of biological role, AMP/ATP-binding subunit of AMP-activated protein kinase (AMPK), an energy sensor protein kinase that plays a key role in regulating cellular energy metabolism. In response to reduction of intracellular ATP levels, AMPK activates energy-producing pathways and inhibits energy-consuming processes: inhibits protein, carbohydrate and lipid biosynthesis, as well as cell growth and proliferation. AMPK acts via direct phosphorylation of metabolic enzymes, and by longer-term effects via phosphorylation of transcription regulators. AMPK also acts as a regulator of cellular polarity by remodeling the actin cytoskeleton; probably by indirectly activating myosin. The AMPK gamma3 subunit is a non-catalytic subunit with a regulatory role in muscle energy metabolism. It mediates binding to AMP, ADP and ATP, leading to AMPK activation or inhibition: AMP-binding results in allosteric activation of alpha catalytic subunit (PRKAA1 or PRKAA2) both by inducing phosphorylation and preventing dephosphorylation of catalytic subunits. ADP also stimulates phosphorylation, without stimulating already phosphorylated catalytic subunit. ATP promotes dephosphorylation of catalytic subunit, rendering the AMPK enzyme inactive. This Homo sapiens (Human) protein is 5'-AMP-activated protein kinase subunit gamma-3 (PRKAG3).